The chain runs to 765 residues: MTVHNDTVEQAAAQPELEQPYRELGLKDDEYAHIREILGRRPTDAELTMYSVMWSEHCSYKSSKTHLRYFGETMTEEMGSKILAGIGENAGVVDIGDGNAVTFRVESHNHPSYVEPHQGAATGVGGIVRDIMAMGARPIAVMDQLRFGPADAPDTKRVLPGVVGGISHYGNCLGLPNIGGETVFDESYSGNPLVNALCVGTLKVDDLKLAFASGTGNKVMLFGSRTGLDGIGGVSVLASDTFEDGAERKLPAVQVGDPFAEKVLIECCLELYKSGIVVGIQDLGGAGLACATSELAAAGDGGMEINLDNVPLRAKDMTAAEILASESQERMCAVVTPENVEKFKEICAHWDVTCAEIGEVTTGKHLIIRHQGEVVVDAPAGTIADEAPVYDRPYARPEWQDALQEFKGVEKQDLTVALKKLVASPALCSRDFITEQYDRYVRGNTVQSHHANAGVLRIDEETGRGIAVSADASGRYTKLDPNMGTRLALAEAYRNVAVTGARPVAITNCLNYGSPENPDVMWQFRESVHGLADGAVELGIPVSGGNVSFYNQTGEEPILPTPVVGVLGVIDDVHKSIGNELGLVEEPEVLVLLGETKDEFGGSIWQQVSAREQGNESENGLNGLPPQVDLANEQRLADFFVGNEGVTAAHDLSEGGLAVTAFEMAKRSGVGLNLDLSKVHEDAFVAAFSESASRVLVATTADRVDMLLHRAEECGVPAVVIGQTTDNGELELGGESIAVSELREAWAATLPDLFGHAVGANSVVE.

The active site involves His57. ATP-binding residues include Tyr60 and Arg104. Mg(2+) is bound at residue Glu106. Substrate-binding positions include 107–110 (SHNH) and Arg129. The active-site Proton acceptor is His108. Residue Asp130 participates in Mg(2+) binding. Gln254 serves as a coordination point for substrate. Asp282 is a Mg(2+) binding site. Position 326-328 (326-328 (ESQ)) interacts with substrate. Positions 508 and 545 each coordinate ATP. Position 546 (Asn546) interacts with Mg(2+). Ser548 provides a ligand contact to substrate.

Belongs to the FGAMS family. As to quaternary structure, monomer. Part of the FGAM synthase complex composed of 1 PurL, 1 PurQ and 2 PurS subunits.

The protein resides in the cytoplasm. The enzyme catalyses N(2)-formyl-N(1)-(5-phospho-beta-D-ribosyl)glycinamide + L-glutamine + ATP + H2O = 2-formamido-N(1)-(5-O-phospho-beta-D-ribosyl)acetamidine + L-glutamate + ADP + phosphate + H(+). It participates in purine metabolism; IMP biosynthesis via de novo pathway; 5-amino-1-(5-phospho-D-ribosyl)imidazole from N(2)-formyl-N(1)-(5-phospho-D-ribosyl)glycinamide: step 1/2. Part of the phosphoribosylformylglycinamidine synthase complex involved in the purines biosynthetic pathway. Catalyzes the ATP-dependent conversion of formylglycinamide ribonucleotide (FGAR) and glutamine to yield formylglycinamidine ribonucleotide (FGAM) and glutamate. The FGAM synthase complex is composed of three subunits. PurQ produces an ammonia molecule by converting glutamine to glutamate. PurL transfers the ammonia molecule to FGAR to form FGAM in an ATP-dependent manner. PurS interacts with PurQ and PurL and is thought to assist in the transfer of the ammonia molecule from PurQ to PurL. In Corynebacterium aurimucosum (strain ATCC 700975 / DSM 44827 / CIP 107346 / CN-1) (Corynebacterium nigricans), this protein is Phosphoribosylformylglycinamidine synthase subunit PurL.